The sequence spans 181 residues: Putative manganese efflux pump MntP (181 aa).

The next 5 membrane-spanning stretches (helical) occupy residues 35-55 (IIFG…GSIA), 59-79 (VADW…LLMI), 102-122 (AATG…LAFI), 126-146 (ILIT…LGVM), and 161-181 (ILGG…HLTM).

It belongs to the MntP (TC 9.B.29) family.

It localises to the cell inner membrane. In terms of biological role, probably functions as a manganese efflux pump. In Nitrosomonas eutropha (strain DSM 101675 / C91 / Nm57), this protein is Putative manganese efflux pump MntP.